Here is a 290-residue protein sequence, read N- to C-terminus: 2-hydroxy-6-oxo-6-(2'-aminophenyl)hexa-2,4-dienoic acid hydrolase (290 aa).

Residues Ser-114, Asp-233, and His-261 contribute to the active site.

This sequence belongs to the DmpD/TodF/XylF esterase family. Homodimer.

The enzyme catalyses (2E,4E)-6-(2-aminophenyl)-2-hydroxy-6-oxohexa-2,4-dienoate + H2O = (2E)-2-hydroxypenta-2,4-dienoate + anthranilate + H(+). Its pathway is xenobiotic degradation; carbazole degradation. Involved in the degradation of carbazole, a toxic N-heterocyclic aromatic compound containing dibenzopyrrole system. Catalyzes the hydrolytic cleavage of a carbon-carbon bond of 2-hydroxy-6-oxo-6-(2'-aminophenyl)hexa-2,4-dienoic acid (HOPDA) to yield anthranilate. CarC is specific for 2-hydroxy-6-oxo-6-phenylhexa-2,4-dienoic acid (6-phenyl-HODA), and has little activity toward 2-hydroxy-6-oxohepta-2,4-dienoic acid and 2-hydroxymuconic semialdehyde. The effect of the presence of an amino group or hydroxyl group at the 2'-position of phenyl moiety of 6-phenyl-HODA on the enzyme activity is found to be small. This chain is 2-hydroxy-6-oxo-6-(2'-aminophenyl)hexa-2,4-dienoic acid hydrolase (carC), found in Metapseudomonas resinovorans (Pseudomonas resinovorans).